The sequence spans 207 residues: Probable flagellin 2 (207 aa).

Residues 1 to 14 (MRVGSRKLRRDEKG) constitute a propeptide that is removed on maturation.

This sequence belongs to the archaeal flagellin family.

It localises to the archaeal flagellum. Functionally, flagellin is the subunit protein which polymerizes to form the filaments of archaeal flagella. The protein is Probable flagellin 2 (flaB2) of Archaeoglobus fulgidus (strain ATCC 49558 / DSM 4304 / JCM 9628 / NBRC 100126 / VC-16).